A 149-amino-acid chain; its full sequence is MHFLAAAFLLLTLSASALAEPVHFRDCGSGVGVIKEVNVNPCPTQPCQLHKGQSYSVNVTFTSNTQSKGSKAVVHGIVMGVPIPFPIPDPDGCKSGINCPIQKDQTYSYLNKLPVKAEYPSIKLVVEWKLQDDNDQCLFCWQIPVQIES.

The signal sequence occupies residues 1–19 (MHFLAAAFLLLTLSASALA). 3 disulfide bridges follow: C27–C140, C42–C47, and C93–C99. The N-linked (GlcNAc...) asparagine glycan is linked to N58. K116 bears the N6-acetyllysine mark.

The protein belongs to the NPC2 family. In terms of assembly, interacts with NPC1 (via the second lumenal domain) in a cholestrol-dependent manner. Interacts with NUS1/NgBR, the interaction stabilizes NCP2 and regulates cholesterol trafficking. Interacts with DHDDS. Interacts with NEDD4L (via C2 domain). Interacts with NPC1L1. In terms of processing, N-glycosylated. Found in the epididymal fluid as a 19 kDa glycoprotein that is processed during its passage through the epididymis into a 16 kDa protein. As to expression, found in the fluid from the distal caput to cauda epididymis, not detected in the rete testis and the proximal and middle caput epididymal fluids (at protein level).

The protein localises to the secreted. Its subcellular location is the endoplasmic reticulum. It is found in the lysosome. The catalysed reaction is cholesterol(in) = cholesterol(out). Functionally, intracellular cholesterol transporter which acts in concert with NPC1 and plays an important role in the egress of cholesterol from the lysosomal compartment. Unesterified cholesterol that has been released from LDLs in the lumen of the late endosomes/lysosomes is transferred by NPC2 to the cholesterol-binding pocket in the N-terminal domain of NPC1. May bind and mobilize cholesterol that is associated with membranes. NPC2 binds cholesterol with a 1:1 stoichiometry. Can bind a variety of sterols, including lathosterol, desmosterol and the plant sterols stigmasterol and beta-sitosterol. The secreted form of NCP2 regulates biliary cholesterol secretion via stimulation of ABCG5/ABCG8-mediated cholesterol transport. This Sus scrofa (Pig) protein is NPC intracellular cholesterol transporter 2.